Reading from the N-terminus, the 502-residue chain is Putative ZDHHC-type palmitoyltransferase 3 (502 aa).

Residues Met1–Leu80 are disordered. Residues Lys10–Glu30 show a composition bias toward basic and acidic residues. Residues Asn31 to Tyr52 show a composition bias toward low complexity. An N-linked (GlcNAc...) asparagine glycan is attached at Asn58. Acidic residues predominate over residues Asp59–Thr73. Helical transmembrane passes span Phe104–Val124 and Leu134–Tyr154. Residues Ile200–Gln281 are disordered. The span at Asp203–Phe212 shows a compositional bias: low complexity. Acidic residues predominate over residues Ser213–Glu222. Low complexity predominate over residues Asn248–Asn280. N-linked (GlcNAc...) asparagine glycosylation is found at Asn252 and Asn280. The 51-residue stretch at Lys299–Thr349 folds into the DHHC domain. The S-palmitoyl cysteine intermediate role is filled by Cys329. The helical transmembrane segment at Phe344–Val364 threads the bilayer. N-linked (GlcNAc...) asparagine glycans are attached at residues Asn371, Asn388, and Asn393. Residues Gly419–Val439 traverse the membrane as a helical segment. Residues Asn449, Asn483, and Asn494 are each glycosylated (N-linked (GlcNAc...) asparagine).

It belongs to the DHHC palmitoyltransferase family.

The protein localises to the membrane. It carries out the reaction L-cysteinyl-[protein] + hexadecanoyl-CoA = S-hexadecanoyl-L-cysteinyl-[protein] + CoA. The protein is Putative ZDHHC-type palmitoyltransferase 3 of Dictyostelium discoideum (Social amoeba).